Here is an 888-residue protein sequence, read N- to C-terminus: Alanine--tRNA ligase (888 aa).

4 residues coordinate Zn(2+): His-570, His-574, Cys-673, and His-677.

This sequence belongs to the class-II aminoacyl-tRNA synthetase family. It depends on Zn(2+) as a cofactor.

The protein resides in the cytoplasm. The catalysed reaction is tRNA(Ala) + L-alanine + ATP = L-alanyl-tRNA(Ala) + AMP + diphosphate. In terms of biological role, catalyzes the attachment of alanine to tRNA(Ala) in a two-step reaction: alanine is first activated by ATP to form Ala-AMP and then transferred to the acceptor end of tRNA(Ala). Also edits incorrectly charged Ser-tRNA(Ala) and Gly-tRNA(Ala) via its editing domain. This chain is Alanine--tRNA ligase, found in Chlorobium phaeobacteroides (strain DSM 266 / SMG 266 / 2430).